Reading from the N-terminus, the 502-residue chain is Glycerol kinase (502 aa).

Thr-14 serves as a coordination point for ADP. Residues Thr-14, Thr-15, and Ser-16 each coordinate ATP. Position 14 (Thr-14) interacts with sn-glycerol 3-phosphate. Arg-18 lines the ADP pocket. Residues Arg-84, Glu-85, Tyr-137, and Asp-247 each contribute to the sn-glycerol 3-phosphate site. 5 residues coordinate glycerol: Arg-84, Glu-85, Tyr-137, Asp-247, and Gln-248. ADP-binding residues include Thr-269 and Gly-312. The ATP site is built by Thr-269, Gly-312, Gln-316, and Gly-413. 2 residues coordinate ADP: Gly-413 and Asn-417.

The protein belongs to the FGGY kinase family. Homotetramer and homodimer (in equilibrium). Heterodimer with EIIA-Glc. Binds 1 zinc ion per glycerol kinase EIIA-Glc dimer. The zinc ion is important for dimerization.

It carries out the reaction glycerol + ATP = sn-glycerol 3-phosphate + ADP + H(+). It functions in the pathway polyol metabolism; glycerol degradation via glycerol kinase pathway; sn-glycerol 3-phosphate from glycerol: step 1/1. Its activity is regulated as follows. Activity of this regulatory enzyme is affected by several metabolites. Allosterically and non-competitively inhibited by fructose 1,6-bisphosphate (FBP) and unphosphorylated phosphocarrier protein EIIA-Glc (III-Glc), an integral component of the bacterial phosphotransferase (PTS) system. Functionally, key enzyme in the regulation of glycerol uptake and metabolism. Catalyzes the phosphorylation of glycerol to yield sn-glycerol 3-phosphate. This is Glycerol kinase from Photorhabdus laumondii subsp. laumondii (strain DSM 15139 / CIP 105565 / TT01) (Photorhabdus luminescens subsp. laumondii).